Here is a 247-residue protein sequence, read N- to C-terminus: Uridylate kinase (247 aa).

An ATP-binding site is contributed by 15–18 (KLSG). The interval 23–28 (GEEGFG) is involved in allosteric activation by GTP. Glycine 57 is a UMP binding site. ATP contacts are provided by glycine 58 and arginine 62. UMP contacts are provided by residues aspartate 77 and 138–145 (TGNPFCTT). The ATP site is built by threonine 165, tyrosine 171, and aspartate 174.

The protein belongs to the UMP kinase family. As to quaternary structure, homohexamer.

It localises to the cytoplasm. The enzyme catalyses UMP + ATP = UDP + ADP. The protein operates within pyrimidine metabolism; CTP biosynthesis via de novo pathway; UDP from UMP (UMPK route): step 1/1. Allosterically activated by GTP. Inhibited by UTP. Catalyzes the reversible phosphorylation of UMP to UDP. The chain is Uridylate kinase from Shewanella loihica (strain ATCC BAA-1088 / PV-4).